The chain runs to 258 residues: Imidazole glycerol phosphate synthase subunit HisF (258 aa).

Residues Asp11 and Asp130 contribute to the active site.

This sequence belongs to the HisA/HisF family. In terms of assembly, heterodimer of HisH and HisF.

Its subcellular location is the cytoplasm. The catalysed reaction is 5-[(5-phospho-1-deoxy-D-ribulos-1-ylimino)methylamino]-1-(5-phospho-beta-D-ribosyl)imidazole-4-carboxamide + L-glutamine = D-erythro-1-(imidazol-4-yl)glycerol 3-phosphate + 5-amino-1-(5-phospho-beta-D-ribosyl)imidazole-4-carboxamide + L-glutamate + H(+). Its pathway is amino-acid biosynthesis; L-histidine biosynthesis; L-histidine from 5-phospho-alpha-D-ribose 1-diphosphate: step 5/9. Functionally, IGPS catalyzes the conversion of PRFAR and glutamine to IGP, AICAR and glutamate. The HisF subunit catalyzes the cyclization activity that produces IGP and AICAR from PRFAR using the ammonia provided by the HisH subunit. In Yersinia enterocolitica serotype O:8 / biotype 1B (strain NCTC 13174 / 8081), this protein is Imidazole glycerol phosphate synthase subunit HisF.